The primary structure comprises 199 residues: Recombination protein RecR (199 aa).

A C4-type zinc finger spans residues 57 to 72 (CSICGNITEDDPCVIC). Residues 80 to 176 (STVLVVEEAK…KVTRLAHGLS (97 aa)) enclose the Toprim domain.

This sequence belongs to the RecR family.

Its function is as follows. May play a role in DNA repair. It seems to be involved in an RecBC-independent recombinational process of DNA repair. It may act with RecF and RecO. This is Recombination protein RecR from Lactiplantibacillus plantarum (strain ATCC BAA-793 / NCIMB 8826 / WCFS1) (Lactobacillus plantarum).